Here is a 270-residue protein sequence, read N- to C-terminus: Putative phosphoenolpyruvate synthase regulatory protein (270 aa).

150-157 (GVSRCGKT) contacts ADP.

Belongs to the pyruvate, phosphate/water dikinase regulatory protein family. PSRP subfamily.

The enzyme catalyses [pyruvate, water dikinase] + ADP = [pyruvate, water dikinase]-phosphate + AMP + H(+). It carries out the reaction [pyruvate, water dikinase]-phosphate + phosphate + H(+) = [pyruvate, water dikinase] + diphosphate. Functionally, bifunctional serine/threonine kinase and phosphorylase involved in the regulation of the phosphoenolpyruvate synthase (PEPS) by catalyzing its phosphorylation/dephosphorylation. The chain is Putative phosphoenolpyruvate synthase regulatory protein from Shewanella oneidensis (strain ATCC 700550 / JCM 31522 / CIP 106686 / LMG 19005 / NCIMB 14063 / MR-1).